Here is a 658-residue protein sequence, read N- to C-terminus: Translation factor GUF1, mitochondrial (658 aa).

Residues 1 to 40 constitute a mitochondrion transit peptide; the sequence is MRGCLQTVRWLTSAWQRPRSYSPLSRAAPCRFFNVSIPRN. A tr-type G domain is found at 60-240; it reads DRFRNFCIVA…TVVEQIPAPV (181 aa). GTP contacts are provided by residues 69–76, 133–137, and 187–190; these read AHVDHGKS, DTPGH, and NKVD.

The protein belongs to the TRAFAC class translation factor GTPase superfamily. Classic translation factor GTPase family. LepA subfamily.

It localises to the mitochondrion inner membrane. The enzyme catalyses GTP + H2O = GDP + phosphate + H(+). In terms of biological role, promotes mitochondrial protein synthesis. May act as a fidelity factor of the translation reaction, by catalyzing a one-codon backward translocation of tRNAs on improperly translocated ribosomes. Binds to mitochondrial ribosomes in a GTP-dependent manner. The protein is Translation factor GUF1, mitochondrial of Paracoccidioides lutzii (strain ATCC MYA-826 / Pb01) (Paracoccidioides brasiliensis).